Reading from the N-terminus, the 705-residue chain is Polyribonucleotide nucleotidyltransferase (705 aa).

Mg(2+)-binding residues include Asp-485 and Asp-491. One can recognise a KH domain in the interval 552-611 (PRVYTMTIAPEKIRDVIGAGGKTINKIIGETGVQIDIKEDGKIYVMSSDSVGANRALKMI). The S1 motif domain maps to 621-689 (GEIYLGKVTR…DQGRINLSRR (69 aa)).

It belongs to the polyribonucleotide nucleotidyltransferase family. The cofactor is Mg(2+).

The protein resides in the cytoplasm. The enzyme catalyses RNA(n+1) + phosphate = RNA(n) + a ribonucleoside 5'-diphosphate. Its function is as follows. Involved in mRNA degradation. Catalyzes the phosphorolysis of single-stranded polyribonucleotides processively in the 3'- to 5'-direction. This chain is Polyribonucleotide nucleotidyltransferase, found in Clostridium tetani (strain Massachusetts / E88).